Consider the following 365-residue polypeptide: Palmitoyltransferase ZDHHC20 (365 aa).

The Cytoplasmic portion of the chain corresponds to 1–14 (MAPCTLWRCCQRTV). Residues 15–35 (GWVPVLFITFVVVWSYYAYVV) form a helical membrane-spanning segment. The Lumenal portion of the chain corresponds to 36–53 (ELCVFTLSGNGENGKAVV). Residues 54 to 74 (YLVAFHLFFVMFVWSYWMTIF) traverse the membrane as a helical segment. At 75–169 (TSPASPSKEF…NNCVGFSNYK (95 aa)) the chain is on the cytoplasmic side. The region spanning 126-176 (RYCERCQLIKPDRAHHCSACDMCILKMDHHCPWVNNCVGFSNYKFFLLFLF) is the DHHC domain. Zn(2+) is bound by residues Cys128 and Cys131. Residues Lys135 and 140–143 (HHCS) each bind substrate. Zn(2+) contacts are provided by His141, Cys142, Cys145, Cys148, and His155. Cys156 functions as the S-palmitoyl cysteine intermediate in the catalytic mechanism. Cys162 contributes to the Zn(2+) binding site. The helical transmembrane segment at 170 to 190 (FFLLFLFYSLLYCLFVATTVL) threads the bilayer. Over 191–207 (QYFIKFWTNELTDTRAK) the chain is Lumenal. Residues 208–231 (FHVLFLFFVSTMFFISVLSLLSYH) traverse the membrane as a helical segment. Over 232 to 365 (CWLVGKNRTT…NNHVTVAIEN (134 aa)) the chain is Cytoplasmic. The segment at 301-365 (PEQASVSNQS…NNHVTVAIEN (65 aa)) is disordered. Polar residues predominate over residues 302-321 (EQASVSNQSESARSIGSNQP). Phosphoserine occurs at positions 305 and 330.

Belongs to the DHHC palmitoyltransferase family. Post-translationally, autopalmitoylated (in vitro).

It localises to the golgi apparatus membrane. Its subcellular location is the cell membrane. The protein localises to the cytoplasm. It is found in the perinuclear region. The protein resides in the endoplasmic reticulum membrane. It localises to the endoplasmic reticulum-Golgi intermediate compartment membrane. The catalysed reaction is L-cysteinyl-[protein] + hexadecanoyl-CoA = S-hexadecanoyl-L-cysteinyl-[protein] + CoA. The enzyme catalyses L-cysteinyl-[protein] + tetradecanoyl-CoA = S-tetradecanoyl-L-cysteinyl-[protein] + CoA. It catalyses the reaction L-cysteinyl-[protein] + octadecanoyl-CoA = S-octadecanoyl-L-cysteinyl-[protein] + CoA. Functionally, palmitoyltransferase that could catalyze the addition of palmitate onto various protein substrates. Catalyzes palmitoylation of Cys residues in the cytoplasmic C-terminus of EGFR, and modulates the duration of EGFR signaling by modulating palmitoylation-dependent EGFR internalization and degradation. Has a preference for acyl-CoA with C16 fatty acid chains. Can also utilize acyl-CoA with C14 and C18 fatty acid chains. May palmitoylate CALHM1 subunit of gustatory voltage-gated ion channels and modulate channel gating and kinetics. The chain is Palmitoyltransferase ZDHHC20 from Bos taurus (Bovine).